The sequence spans 133 residues: Small ribosomal subunit protein uS8 (133 aa).

Belongs to the universal ribosomal protein uS8 family. As to quaternary structure, part of the 30S ribosomal subunit. Contacts proteins S5 and S12.

One of the primary rRNA binding proteins, it binds directly to 16S rRNA central domain where it helps coordinate assembly of the platform of the 30S subunit. The protein is Small ribosomal subunit protein uS8 of Parasynechococcus marenigrum (strain WH8102).